We begin with the raw amino-acid sequence, 206 residues long: Ribosomal RNA large subunit methyltransferase E (206 aa).

S-adenosyl-L-methionine contacts are provided by Gly-63, Trp-65, Asp-83, Asp-99, and Asp-124. Lys-164 functions as the Proton acceptor in the catalytic mechanism.

The protein belongs to the class I-like SAM-binding methyltransferase superfamily. RNA methyltransferase RlmE family.

The protein localises to the cytoplasm. The enzyme catalyses uridine(2552) in 23S rRNA + S-adenosyl-L-methionine = 2'-O-methyluridine(2552) in 23S rRNA + S-adenosyl-L-homocysteine + H(+). Its function is as follows. Specifically methylates the uridine in position 2552 of 23S rRNA at the 2'-O position of the ribose in the fully assembled 50S ribosomal subunit. The protein is Ribosomal RNA large subunit methyltransferase E of Buchnera aphidicola subsp. Acyrthosiphon pisum (strain APS) (Acyrthosiphon pisum symbiotic bacterium).